We begin with the raw amino-acid sequence, 328 residues long: Phosphate acyltransferase (328 aa).

This sequence belongs to the PlsX family. Homodimer. Probably interacts with PlsY.

The protein resides in the cytoplasm. The catalysed reaction is a fatty acyl-[ACP] + phosphate = an acyl phosphate + holo-[ACP]. It participates in lipid metabolism; phospholipid metabolism. Its function is as follows. Catalyzes the reversible formation of acyl-phosphate (acyl-PO(4)) from acyl-[acyl-carrier-protein] (acyl-ACP). This enzyme utilizes acyl-ACP as fatty acyl donor, but not acyl-CoA. This is Phosphate acyltransferase from Staphylococcus aureus (strain MSSA476).